Reading from the N-terminus, the 39-residue chain is Photosystem II reaction center protein J (39 aa).

A helical transmembrane segment spans residues 9–29; the sequence is LWLVATVGGMAAITVLGIFIY.

The protein belongs to the PsbJ family. PSII is composed of 1 copy each of membrane proteins PsbA, PsbB, PsbC, PsbD, PsbE, PsbF, PsbH, PsbI, PsbJ, PsbK, PsbL, PsbM, PsbT, PsbX, PsbY, PsbZ, Psb30/Ycf12, at least 3 peripheral proteins of the oxygen-evolving complex and a large number of cofactors. It forms dimeric complexes.

Its subcellular location is the plastid. The protein resides in the chloroplast thylakoid membrane. Its function is as follows. One of the components of the core complex of photosystem II (PSII). PSII is a light-driven water:plastoquinone oxidoreductase that uses light energy to abstract electrons from H(2)O, generating O(2) and a proton gradient subsequently used for ATP formation. It consists of a core antenna complex that captures photons, and an electron transfer chain that converts photonic excitation into a charge separation. The polypeptide is Photosystem II reaction center protein J (Porphyra purpurea (Red seaweed)).